Consider the following 131-residue polypeptide: Protein FON2 SPARE1 (131 aa).

Positions 1-22 (MSRRLGAAAAVLLLWLAVLTFA) are cleaved as a signal peptide. The disordered stretch occupies residues 67-131 (SPSSLTTTDR…VPTGPNPLHH (65 aa)). The span at 76-97 (RHHHHHRHHGHHHHRGHDRWNR) shows a compositional bias: basic residues.

This sequence belongs to the CLV3/ESR signal peptide family. In terms of tissue distribution, expressed in all aerial apical meristems, including the floral and inflorescence meristems in the reproductive phase and the shoot apical meristem in the vegetative phase. Also detected in the primordia of lateral organs such as the leaf and the floral organs.

The protein resides in the secreted. Involved in the maintenance of the floral meristem and of the shoot apical meristem in the vegetative phase. Suppresses the fon2 mutation and acts independently of FON1. In Oryza sativa subsp. japonica, the protein has a single amino acid substitution at the putative processing site of the signal peptide and is inactive. The polypeptide is Protein FON2 SPARE1 (FOS1) (Oryza sativa subsp. indica (Rice)).